The sequence spans 1875 residues: Soluble starch synthase 3a, chloroplastic/amyloplastic (1875 aa).

The N-terminal 49 residues, 1–49 (MEMALRPQSLLCPRSRLKVVIRPASSASGGGLAQYFLMTRRYTGSRIVR), are a transit peptide targeting the chloroplast. Residues 1007–1065 (KRELERVATEEAERRRHAEEQQRMGEQRAAEQAAREQAKKEIELKKNKLQNLLSSARTH) are a coiled coil. The interval 1014-1043 (ATEEAERRRHAEEQQRMGEQRAAEQAAREQ) is disordered.

This sequence belongs to the glycosyltransferase 1 family. Bacterial/plant glycogen synthase subfamily. As to expression, expressed in the endosperm.

It is found in the plastid. Its subcellular location is the chloroplast. The protein resides in the amyloplast. It carries out the reaction [(1-&gt;4)-alpha-D-glucosyl](n) + ADP-alpha-D-glucose = [(1-&gt;4)-alpha-D-glucosyl](n+1) + ADP + H(+). Its pathway is glycan biosynthesis; starch biosynthesis. Its function is as follows. Involved in starch synthesis in endosperm amyloplasts. Plays an important role in the elongation of amylopectin B chains. The polypeptide is Soluble starch synthase 3a, chloroplastic/amyloplastic (Oryza sativa subsp. japonica (Rice)).